The following is a 373-amino-acid chain: MTDNSKTRVVVGMSGGVDSSVTALLLKEQGYDVIGVFMKNWDDTDEFGVCTATEDYKDVAAVADQIDIPYYSVNFEKEYWDRVFEYFLAEYRAGRTPNPDVMCNKEIKFKAFLDYAMTLGADYVATGHYAQVVRDEDGIVHMLRGADNNKDQTYFLSQLSQEQLQKAMFPLGHLQKSEVREIAERAGLATAKKKDSTGICFIGEKNFKEFLSQYLPAQKGRMMTVDGRDMGEHNGLMYYTIGQRGGMGIGGQKGGDNAPWFVVGKDLSKNILYVGQGFHHESLMSTSLDASTIHFTRDMPEEFEMECTAKFRYRQPDSKVTVKVKGDKSEVIFAEPQRAITPGQAVVFYDGQECLGGGIIDQAYKDGKVCQYI.

ATP contacts are provided by residues 12 to 19 and Met38; that span reads GMSGGVDS. An interaction with target base in tRNA region spans residues 98 to 100; sequence NPD. Catalysis depends on Cys103, which acts as the Nucleophile. Cys103 and Cys200 form a disulfide bridge. Gly127 serves as a coordination point for ATP. An interaction with tRNA region spans residues 150-152; the sequence is KDQ. The Cysteine persulfide intermediate role is filled by Cys200. Residues 312 to 313 form an interaction with tRNA region; sequence RY.

This sequence belongs to the MnmA/TRMU family.

Its subcellular location is the cytoplasm. The catalysed reaction is S-sulfanyl-L-cysteinyl-[protein] + uridine(34) in tRNA + AH2 + ATP = 2-thiouridine(34) in tRNA + L-cysteinyl-[protein] + A + AMP + diphosphate + H(+). Functionally, catalyzes the 2-thiolation of uridine at the wobble position (U34) of tRNA, leading to the formation of s(2)U34. The sequence is that of tRNA-specific 2-thiouridylase MnmA from Streptococcus thermophilus (strain ATCC BAA-491 / LMD-9).